A 151-amino-acid polypeptide reads, in one-letter code: Ribonuclease H (151 aa).

Positions 1 to 141 (MKHVDIFTDG…ADELARRGME (141 aa)) constitute an RNase H type-1 domain. Residues Asp-9, Glu-47, Asp-69, and Asp-133 each coordinate Mg(2+).

The protein belongs to the RNase H family. As to quaternary structure, monomer. It depends on Mg(2+) as a cofactor.

The protein localises to the cytoplasm. It catalyses the reaction Endonucleolytic cleavage to 5'-phosphomonoester.. Functionally, endonuclease that specifically degrades the RNA of RNA-DNA hybrids. The protein is Ribonuclease H of Rhizobium etli (strain ATCC 51251 / DSM 11541 / JCM 21823 / NBRC 15573 / CFN 42).